The sequence spans 204 residues: Thymidylate kinase (204 aa).

Residue 11 to 18 (GLDKSGKT) coordinates ATP.

This sequence belongs to the thymidylate kinase family.

The catalysed reaction is dTMP + ATP = dTDP + ADP. Its pathway is pyrimidine metabolism; dTTP biosynthesis. The protein is Thymidylate kinase (TMK) of Bos taurus (Bovine).